Consider the following 545-residue polypeptide: Dual specificity calcium/calmodulin-dependent 3',5'-cyclic nucleotide phosphodiesterase 1A (545 aa).

Calmodulin-binding regions lie at residues 24 to 44 (TEKM…QLEK) and 114 to 137 (EKPK…MYRK). Residues 142-522 (VGLTYPAAVI…ERWKELAAQG (381 aa)) enclose the PDEase domain. Histidine 219 (proton donor) is an active-site residue. Zn(2+) contacts are provided by histidine 223, histidine 259, aspartate 260, and aspartate 366. Mg(2+) is bound at residue aspartate 260. Positions 526 to 545 (LHKNSEELGNTEEKHADTRP) are disordered.

Belongs to the cyclic nucleotide phosphodiesterase family. PDE1 subfamily. Homodimer. Interacts with YWHAZ. Zn(2+) serves as cofactor. Requires Mg(2+) as cofactor. As to expression, expressed in brain, kidney and testis.

Its subcellular location is the cell projection. It is found in the cilium. It localises to the flagellum. It carries out the reaction a nucleoside 3',5'-cyclic phosphate + H2O = a nucleoside 5'-phosphate + H(+). The enzyme catalyses 3',5'-cyclic GMP + H2O = GMP + H(+). The catalysed reaction is 3',5'-cyclic AMP + H2O = AMP + H(+). Type I PDE are activated by the binding of calmodulin in the presence of Ca(2+). With respect to regulation, activated by the binding of calmodulin in the presence of Ca(2+). Its function is as follows. Calcium/calmodulin-dependent cyclic nucleotide phosphodiesterase with a dual specificity for the second messengers cGMP and cAMP, which are key regulators of many important physiological processes. Has a higher efficiency with cGMP compared to cAMP. The protein is Dual specificity calcium/calmodulin-dependent 3',5'-cyclic nucleotide phosphodiesterase 1A of Mus musculus (Mouse).